A 463-amino-acid polypeptide reads, in one-letter code: MTTETRSLYSQLPAIDRLLRDSSFLSLRDTYGHTRVVELLRQMLDEAREVIRDSQTLPAWCENWAQEVDARLTKEAQSALRPVINLTGTVLHTNLGRALQAEAAVEAVTKAMRSPVTLEYDLDDAGRGHRDRALAQLLCRITGAEDACIVNNNAAAVLLMLAATASGKEVVVSRGELVEIGGAFRIPDVMRQAGCTLHEVGTTNRTHANDYRQAVNENTALLMKVHTSNYSIQGFTKAIDEAELVALGKELDVPVVTDLGSGSLVDLSQYGLPKEPMPQELIAAGVSLVSFSGDKLLGGPQAGIIVGKKEMIARLQSHPLKRALRADKMTLAALEATLRLYLHSEALSEKLPTLRLLTRSAEVIQIQAQRLQAPLAAHYGAEFAVQVMPCLSQIGSGSLPVDRLPSAALTFTPHDGRGSHLESLAARWRELPVPVIGRIYDGRLWLDLRCLEDEQRFLEMLLK.

Lys-295 is subject to N6-(pyridoxal phosphate)lysine.

It belongs to the SelA family. In terms of assembly, homodecamer; pentamer of dimers. Binds only one seryl-tRNA(Sec) per dimer. Pyridoxal 5'-phosphate is required as a cofactor.

It localises to the cytoplasm. The catalysed reaction is L-seryl-tRNA(Sec) + selenophosphate + H(+) = L-selenocysteinyl-tRNA(Sec) + phosphate. The protein operates within aminoacyl-tRNA biosynthesis; selenocysteinyl-tRNA(Sec) biosynthesis; selenocysteinyl-tRNA(Sec) from L-seryl-tRNA(Sec) (bacterial route): step 1/1. Its function is as follows. Converts seryl-tRNA(Sec) to selenocysteinyl-tRNA(Sec) required for selenoprotein biosynthesis. This is L-seryl-tRNA(Sec) selenium transferase from Escherichia coli O45:K1 (strain S88 / ExPEC).